The sequence spans 618 residues: COMPASS component cclA (618 aa).

Residues 1–91 (MSSIQPVGSS…KKAAVAPNSA (91 aa)) form a disordered region. 2 stretches are compositionally biased toward low complexity: residues 8 to 19 (GSSGPSSNINSP) and 37 to 49 (NARS…SNAS). Over residues 57–69 (SKRNKRDSRKKRE) the composition is skewed to basic residues. Residues 157–368 (IADPGFPHIK…QSNVFSTKHL (212 aa)) enclose the B30.2/SPRY domain. The tract at residues 588-618 (TLSVGHEGSPNPATPSAPLENTVPTEDVEMS) is disordered.

The protein belongs to the cclA family. In terms of assembly, component of the COMPASS complex.

It localises to the nucleus. The protein localises to the chromosome. Its subcellular location is the telomere. Component of the COMPASS (Set1C) complex that specifically mono-, di- and trimethylates histone H3 to form H3K4me1/2/3, which subsequently plays a role in telomere length maintenance and transcription elongation regulation. Controls the production of several secondary metabolites, including gliotoxin, but does not contribute to pathogenicity. The sequence is that of COMPASS component cclA from Aspergillus fumigatus (strain ATCC MYA-4609 / CBS 101355 / FGSC A1100 / Af293) (Neosartorya fumigata).